The following is a 657-amino-acid chain: UvrABC system protein B (657 aa).

Positions 23 to 414 constitute a Helicase ATP-binding domain; it reads KSIKKGNKYQ…KENIFHQIMR (392 aa). 36 to 43 is a binding site for ATP; sequence GVTGSGKT. The Beta-hairpin signature appears at 89-112; the sequence is YYDYYQPEAYIPRTDVFIEKDSST. The 163-residue stretch at 431 to 593 folds into the Helicase C-terminal domain; the sequence is QVEILFDEAK…ITPTSVKRHI (163 aa). Residues 622-657 form the UVR domain; sequence AKLAKELRKQMLEAAKALEFEKAAAIRDEINKLRDL.

Belongs to the UvrB family. In terms of assembly, forms a heterotetramer with UvrA during the search for lesions. Interacts with UvrC in an incision complex.

It is found in the cytoplasm. Functionally, the UvrABC repair system catalyzes the recognition and processing of DNA lesions. A damage recognition complex composed of 2 UvrA and 2 UvrB subunits scans DNA for abnormalities. Upon binding of the UvrA(2)B(2) complex to a putative damaged site, the DNA wraps around one UvrB monomer. DNA wrap is dependent on ATP binding by UvrB and probably causes local melting of the DNA helix, facilitating insertion of UvrB beta-hairpin between the DNA strands. Then UvrB probes one DNA strand for the presence of a lesion. If a lesion is found the UvrA subunits dissociate and the UvrB-DNA preincision complex is formed. This complex is subsequently bound by UvrC and the second UvrB is released. If no lesion is found, the DNA wraps around the other UvrB subunit that will check the other stand for damage. The protein is UvrABC system protein B of Campylobacter jejuni (strain RM1221).